The sequence spans 309 residues: UDP-N-acetylenolpyruvoylglucosamine reductase (309 aa).

In terms of domain architecture, FAD-binding PCMH-type spans 33 to 198 (RVGGPAQVLF…TSARFRGTPA (166 aa)). Residue arginine 178 is part of the active site. Serine 227 acts as the Proton donor in catalysis. Residue glutamate 297 is part of the active site.

This sequence belongs to the MurB family. Requires FAD as cofactor.

The protein resides in the cytoplasm. The catalysed reaction is UDP-N-acetyl-alpha-D-muramate + NADP(+) = UDP-N-acetyl-3-O-(1-carboxyvinyl)-alpha-D-glucosamine + NADPH + H(+). Its pathway is cell wall biogenesis; peptidoglycan biosynthesis. In terms of biological role, cell wall formation. The polypeptide is UDP-N-acetylenolpyruvoylglucosamine reductase (Rhodopseudomonas palustris (strain HaA2)).